Here is a 245-residue protein sequence, read N- to C-terminus: tRNA pseudouridine synthase A (245 aa).

Aspartate 52 serves as the catalytic Nucleophile. Tyrosine 111 is a substrate binding site.

It belongs to the tRNA pseudouridine synthase TruA family. As to quaternary structure, homodimer.

It catalyses the reaction uridine(38/39/40) in tRNA = pseudouridine(38/39/40) in tRNA. In terms of biological role, formation of pseudouridine at positions 38, 39 and 40 in the anticodon stem and loop of transfer RNAs. This chain is tRNA pseudouridine synthase A, found in Wolbachia pipientis subsp. Culex pipiens (strain wPip).